The primary structure comprises 188 residues: Archaetidylinositol phosphate synthase (188 aa).

2 helical membrane-spanning segments follow: residues 20 to 40 (LASL…ITLL) and 51 to 71 (ILAG…GALA). Positions 64, 67, 85, and 89 each coordinate Mg(2+). Aspartate 89 acts as the Proton acceptor in catalysis. Transmembrane regions (helical) follow at residues 96–116 (ILFG…LTLI) and 147–167 (IIII…YLVA).

It belongs to the CDP-alcohol phosphatidyltransferase class-I family. It depends on Mn(2+) as a cofactor. Requires Mg(2+) as cofactor.

It is found in the cell membrane. It catalyses the reaction CDP-2,3-bis-O-(phytanyl)-sn-glycerol + 1D-myo-inositol 3-phosphate = saturated 1-archaetidyl-1D-myo-inositol 3-phosphate + CMP + H(+). It participates in lipid metabolism; phospholipid metabolism. Catalyzes the formation of archaetidylinositol phosphate (AIP) from CDP-archaeol (CDP-ArOH or CDP-2,3-bis-(O-phytanyl)-sn-glycerol) and 1L-myo-inositol 1-phosphate (IP or 1D-myo-inositol 3-phosphate). AIP is a precursor of archaetidyl-myo-inositol (AI), an ether-type inositol phospholipid ubiquitously distributed in archaea membranes and essential for glycolipid biosynthesis in archaea. In Pyrococcus horikoshii (strain ATCC 700860 / DSM 12428 / JCM 9974 / NBRC 100139 / OT-3), this protein is Archaetidylinositol phosphate synthase.